Here is a 449-residue protein sequence, read N- to C-terminus: Naphthalene 1,2-dioxygenase system, large oxygenase component (449 aa).

The Rieske domain maps to 39–137 (WLFLTHDSLI…LNKKCLGLKE (99 aa)). Positions 81, 83, 101, and 104 each coordinate [2Fe-2S] cluster. Residues H208, H213, and D362 each contribute to the Fe cation site.

This sequence belongs to the bacterial ring-hydroxylating dioxygenase alpha subunit family. The naphthalene dioxygenase (NDO) multicomponent enzyme system is composed of an electron transfer component and a dioxygenase component (iron sulfur protein (ISP)). The electron transfer component is composed of a ferredoxin reductase (NdoR) and a ferredoxin (NdoA), and the dioxygenase component is formed of a heterohexamer (trimer of heterodimers) of three large alpha subunits (NdoB) and three small beta subunits (NdoC). Requires [2Fe-2S] cluster as cofactor. It depends on Fe(2+) as a cofactor.

The enzyme catalyses naphthalene + NADH + O2 + H(+) = (1R,2S)-1,2-dihydronaphthalene-1,2-diol + NAD(+). Its pathway is aromatic compound metabolism; naphthalene degradation. Its function is as follows. Component of the naphthalene dioxygenase (NDO) multicomponent enzyme system which catalyzes the incorporation of both atoms of molecular oxygen into naphthalene to form cis-(1R,2S)-dihydroxy-1,2-dihydronaphthalene. The alpha subunit has a catalytic role in the holoenzyme. Also able to catalyze the cis-dihydroxylation of biphenyl and phenanthrene. The polypeptide is Naphthalene 1,2-dioxygenase system, large oxygenase component (Pseudomonas putida (Arthrobacter siderocapsulatus)).